The primary structure comprises 231 residues: Phosphoribosylformylglycinamidine synthase subunit PurQ (231 aa).

In terms of domain architecture, Glutamine amidotransferase type-1 spans 7-231 (GVVVFPGSNC…RLFASLFRQL (225 aa)). Cys-89 functions as the Nucleophile in the catalytic mechanism. Active-site residues include His-206 and Glu-208.

Part of the FGAM synthase complex composed of 1 PurL, 1 PurQ and 2 PurS subunits.

It is found in the cytoplasm. The enzyme catalyses N(2)-formyl-N(1)-(5-phospho-beta-D-ribosyl)glycinamide + L-glutamine + ATP + H2O = 2-formamido-N(1)-(5-O-phospho-beta-D-ribosyl)acetamidine + L-glutamate + ADP + phosphate + H(+). It carries out the reaction L-glutamine + H2O = L-glutamate + NH4(+). Its pathway is purine metabolism; IMP biosynthesis via de novo pathway; 5-amino-1-(5-phospho-D-ribosyl)imidazole from N(2)-formyl-N(1)-(5-phospho-D-ribosyl)glycinamide: step 1/2. Part of the phosphoribosylformylglycinamidine synthase complex involved in the purines biosynthetic pathway. Catalyzes the ATP-dependent conversion of formylglycinamide ribonucleotide (FGAR) and glutamine to yield formylglycinamidine ribonucleotide (FGAM) and glutamate. The FGAM synthase complex is composed of three subunits. PurQ produces an ammonia molecule by converting glutamine to glutamate. PurL transfers the ammonia molecule to FGAR to form FGAM in an ATP-dependent manner. PurS interacts with PurQ and PurL and is thought to assist in the transfer of the ammonia molecule from PurQ to PurL. The polypeptide is Phosphoribosylformylglycinamidine synthase subunit PurQ (Chlorobium luteolum (strain DSM 273 / BCRC 81028 / 2530) (Pelodictyon luteolum)).